The following is a 592-amino-acid chain: Aspartate--tRNA ligase (592 aa).

Position 173 (E173) interacts with L-aspartate. Positions 197–200 (QLFK) are aspartate. An L-aspartate-binding site is contributed by R219. Residues 219–221 (RDE) and Q228 each bind ATP. H448 contacts L-aspartate. E482 serves as a coordination point for ATP. Residue R489 coordinates L-aspartate. 534–537 (GLDR) provides a ligand contact to ATP.

It belongs to the class-II aminoacyl-tRNA synthetase family. Type 1 subfamily. Homodimer.

The protein localises to the cytoplasm. It carries out the reaction tRNA(Asp) + L-aspartate + ATP = L-aspartyl-tRNA(Asp) + AMP + diphosphate. Catalyzes the attachment of L-aspartate to tRNA(Asp) in a two-step reaction: L-aspartate is first activated by ATP to form Asp-AMP and then transferred to the acceptor end of tRNA(Asp). The chain is Aspartate--tRNA ligase from Shewanella baltica (strain OS155 / ATCC BAA-1091).